The primary structure comprises 304 residues: Small ribosomal subunit protein uS3 (304 aa).

The 70-residue stretch at 17–86 (IDEFFAEELG…DPQVDVQEVD (70 aa)) folds into the KH type-2 domain. A disordered region spans residues 216–304 (LLEGEPEDSE…DEMDEEGDDE (89 aa)).

This sequence belongs to the universal ribosomal protein uS3 family. Part of the 30S ribosomal subunit.

Binds the lower part of the 30S subunit head. The polypeptide is Small ribosomal subunit protein uS3 (Haloarcula marismortui (strain ATCC 43049 / DSM 3752 / JCM 8966 / VKM B-1809) (Halobacterium marismortui)).